A 37-amino-acid polypeptide reads, in one-letter code: Large ribosomal subunit protein bL36B (37 aa).

Belongs to the bacterial ribosomal protein bL36 family.

This is Large ribosomal subunit protein bL36B from Aeromonas salmonicida (strain A449).